The chain runs to 81 residues: Large ribosomal subunit protein bL31B (81 aa).

The protein belongs to the bacterial ribosomal protein bL31 family. Type B subfamily. As to quaternary structure, part of the 50S ribosomal subunit.

This is Large ribosomal subunit protein bL31B from Borreliella afzelii (strain PKo) (Borrelia afzelii).